Reading from the N-terminus, the 463-residue chain is Succinate--CoA ligase [ADP-forming] subunit beta, mitochondrial (463 aa).

The transit peptide at Met-1–Leu-53 directs the protein to the mitochondrion. An ATP-grasp domain is found at Met-61–Ile-288. Residue Lys-78 is modified to N6-acetyllysine. At Tyr-84 the chain carries Phosphotyrosine. Lys-88 is modified (N6-acetyllysine; alternate). Residue Lys-88 is modified to N6-succinyllysine; alternate. ATP-binding positions include Lys-98 and Gly-105–Gly-107. An N6-acetyllysine mark is found at Lys-129, Lys-139, Lys-143, and Lys-216. Positions 258 and 272 each coordinate Mg(2+). Ser-279 carries the phosphoserine modification. A substrate-binding site is contributed by Asn-323. Residue Thr-341 is modified to Phosphothreonine. The residue at position 368 (Lys-368) is an N6-acetyllysine. Residue Gly-380 to Met-382 participates in substrate binding. Lys-438 bears the N6-acetyllysine mark.

Belongs to the succinate/malate CoA ligase beta subunit family. ATP-specific subunit beta subfamily. As to quaternary structure, heterodimer of an alpha and a beta subunit. The beta subunit determines specificity for ATP. Interacts with ALAS2. Mg(2+) serves as cofactor.

The protein localises to the mitochondrion. It catalyses the reaction succinate + ATP + CoA = succinyl-CoA + ADP + phosphate. It participates in carbohydrate metabolism; tricarboxylic acid cycle; succinate from succinyl-CoA (ligase route): step 1/1. In terms of biological role, ATP-specific succinyl-CoA synthetase functions in the citric acid cycle (TCA), coupling the hydrolysis of succinyl-CoA to the synthesis of ATP and thus represents the only step of substrate-level phosphorylation in the TCA. The beta subunit provides nucleotide specificity of the enzyme and binds the substrate succinate, while the binding sites for coenzyme A and phosphate are found in the alpha subunit. In Mus musculus (Mouse), this protein is Succinate--CoA ligase [ADP-forming] subunit beta, mitochondrial.